We begin with the raw amino-acid sequence, 531 residues long: CTP synthase (531 aa).

An amidoligase domain region spans residues 1–267; sequence MTKYIIITGG…ASKILSKLNL (267 aa). Residue Ser-13 participates in CTP binding. Position 13 (Ser-13) interacts with UTP. Residue 14–19 participates in ATP binding; sequence SVGKGT. Tyr-54 lines the L-glutamine pocket. Asp-71 is an ATP binding site. Asp-71 and Glu-141 together coordinate Mg(2+). Residues 148-150, 188-193, and Lys-224 contribute to the CTP site; these read DIE and KTKPLQ. UTP is bound by residues 188 to 193 and Lys-224; that span reads KTKPLQ. The Glutamine amidotransferase type-1 domain maps to 292-531; it reads KIALVGKYTK…IGFLRAAAGV (240 aa). Gly-355 is an L-glutamine binding site. The active-site Nucleophile; for glutamine hydrolysis is the Cys-382. Residues 383–386, Glu-406, and Arg-463 each bind L-glutamine; that span reads YGMQ. Catalysis depends on residues His-507 and Glu-509.

The protein belongs to the CTP synthase family. In terms of assembly, homotetramer.

It carries out the reaction UTP + L-glutamine + ATP + H2O = CTP + L-glutamate + ADP + phosphate + 2 H(+). It catalyses the reaction L-glutamine + H2O = L-glutamate + NH4(+). The enzyme catalyses UTP + NH4(+) + ATP = CTP + ADP + phosphate + 2 H(+). Its pathway is pyrimidine metabolism; CTP biosynthesis via de novo pathway; CTP from UDP: step 2/2. Its activity is regulated as follows. Allosterically activated by GTP, when glutamine is the substrate; GTP has no effect on the reaction when ammonia is the substrate. The allosteric effector GTP functions by stabilizing the protein conformation that binds the tetrahedral intermediate(s) formed during glutamine hydrolysis. Inhibited by the product CTP, via allosteric rather than competitive inhibition. Functionally, catalyzes the ATP-dependent amination of UTP to CTP with either L-glutamine or ammonia as the source of nitrogen. Regulates intracellular CTP levels through interactions with the four ribonucleotide triphosphates. The sequence is that of CTP synthase from Sulfurisphaera tokodaii (strain DSM 16993 / JCM 10545 / NBRC 100140 / 7) (Sulfolobus tokodaii).